The chain runs to 183 residues: uncharacterized protein (183 aa).

This is an uncharacterized protein from Saccharolobus islandicus (Sulfolobus islandicus).